A 162-amino-acid chain; its full sequence is Nucleotide-binding protein Adeh_0094 (162 aa).

Belongs to the YajQ family.

Functionally, nucleotide-binding protein. This chain is Nucleotide-binding protein Adeh_0094, found in Anaeromyxobacter dehalogenans (strain 2CP-C).